Here is a 273-residue protein sequence, read N- to C-terminus: Large ribosomal subunit protein uL2 (273 aa).

Residues 221–263 (RGTAMNPVDHPHGGGEGRNFGKHPVTPWGVQTKGKKTRHNKRT) form a disordered region. The segment covering 253-263 (KGKKTRHNKRT) has biased composition (basic residues).

This sequence belongs to the universal ribosomal protein uL2 family. Part of the 50S ribosomal subunit. Forms a bridge to the 30S subunit in the 70S ribosome.

Its function is as follows. One of the primary rRNA binding proteins. Required for association of the 30S and 50S subunits to form the 70S ribosome, for tRNA binding and peptide bond formation. It has been suggested to have peptidyltransferase activity; this is somewhat controversial. Makes several contacts with the 16S rRNA in the 70S ribosome. The chain is Large ribosomal subunit protein uL2 from Histophilus somni (strain 2336) (Haemophilus somnus).